A 300-amino-acid chain; its full sequence is SRWWKDLDFVTTLPYARDRAVECYFWTMGVYAEPQYSQARVMLAKTIAMISIVDDTFDAYGIVKEFEVYTDAIQRWDISQIDRLPEYMKISYKALLDLYDDYEKELSKDGRSDVVHYAKERMKEIVRNYFIEAKWFIEGYMPSVSEYLSNALATSTYYLLTTTSYLGMKSATKEHFEWLATNPKILEANATLCRVVDDIATYEVEKGRGQIATGIECYMRDYGVSTEVAMEKFQEMAEIAWKDVNEEILRPTPVSAEILTRILNLARIIDVTYKHNQDGYTHPEKFKPHIIALLVDSIEI.

Residues Asp-54, Asp-58, Asp-197, Thr-201, and Glu-205 each coordinate Mg(2+). The short motif at 54–58 is the DDXXD motif element; sequence DDTFD.

It belongs to the terpene synthase family. Tpsa subfamily. Mg(2+) serves as cofactor.

It localises to the cytoplasm. It catalyses the reaction (2E,6E)-farnesyl diphosphate = (-)-vetispiradiene + diphosphate. It participates in secondary metabolite biosynthesis; terpenoid biosynthesis. Its function is as follows. Sesquiterpene synthase that catalyzes the formation of vetispiradiene from trans,trans-farnesyl diphosphate. The initial internal cyclization produces the monocyclic intermediate germacrene A. This Hyoscyamus muticus (Egyptian henbane) protein is Vetispiradiene synthase 2.